The chain runs to 242 residues: Ribose-5-phosphate isomerase A (242 aa).

Substrate contacts are provided by residues 39 to 42 (SGST), 95 to 98 (DGAD), and 108 to 111 (KGGG). E117 (proton acceptor) is an active-site residue. K135 lines the substrate pocket.

Belongs to the ribose 5-phosphate isomerase family. In terms of assembly, homodimer.

It catalyses the reaction aldehydo-D-ribose 5-phosphate = D-ribulose 5-phosphate. It functions in the pathway carbohydrate degradation; pentose phosphate pathway; D-ribose 5-phosphate from D-ribulose 5-phosphate (non-oxidative stage): step 1/1. Functionally, catalyzes the reversible conversion of ribose-5-phosphate to ribulose 5-phosphate. The sequence is that of Ribose-5-phosphate isomerase A from Chlamydia trachomatis serovar L2 (strain ATCC VR-902B / DSM 19102 / 434/Bu).